Reading from the N-terminus, the 444-residue chain is Argininosuccinate synthase (444 aa).

ATP-binding positions include 17-25 (AFSGGLDTS) and A43. Y99 provides a ligand contact to L-citrulline. The ATP site is built by G129 and T131. 3 residues coordinate L-aspartate: T131, N135, and D136. Residue N135 participates in L-citrulline binding. D136 is an ATP binding site. 2 residues coordinate L-citrulline: R139 and S192. D194 serves as a coordination point for ATP. T201, E203, and E280 together coordinate L-citrulline.

This sequence belongs to the argininosuccinate synthase family. Type 2 subfamily. As to quaternary structure, homotetramer.

The protein resides in the cytoplasm. The catalysed reaction is L-citrulline + L-aspartate + ATP = 2-(N(omega)-L-arginino)succinate + AMP + diphosphate + H(+). Its pathway is amino-acid biosynthesis; L-arginine biosynthesis; L-arginine from L-ornithine and carbamoyl phosphate: step 2/3. This chain is Argininosuccinate synthase, found in Delftia acidovorans (strain DSM 14801 / SPH-1).